A 348-amino-acid chain; its full sequence is Dihydroorotase (348 aa).

The Zn(2+) site is built by H17 and H19. Substrate is bound by residues H19 to R21 and N45. Residues K103, H140, and H178 each contribute to the Zn(2+) site. At K103 the chain carries N6-carboxylysine. H140 provides a ligand contact to substrate. L223 is a substrate binding site. Residue D251 participates in Zn(2+) binding. Residue D251 is part of the active site. Substrate is bound by residues H255 and A267.

This sequence belongs to the metallo-dependent hydrolases superfamily. DHOase family. Class II DHOase subfamily. Homodimer. It depends on Zn(2+) as a cofactor.

The catalysed reaction is (S)-dihydroorotate + H2O = N-carbamoyl-L-aspartate + H(+). The protein operates within pyrimidine metabolism; UMP biosynthesis via de novo pathway; (S)-dihydroorotate from bicarbonate: step 3/3. Catalyzes the reversible cyclization of carbamoyl aspartate to dihydroorotate. The protein is Dihydroorotase of Shigella boydii serotype 4 (strain Sb227).